A 251-amino-acid polypeptide reads, in one-letter code: Hydroxyacylglutathione hydrolase (251 aa).

Positions 53, 55, 57, 58, 110, 127, and 165 each coordinate Zn(2+).

The protein belongs to the metallo-beta-lactamase superfamily. Glyoxalase II family. In terms of assembly, monomer. Requires Zn(2+) as cofactor.

The catalysed reaction is an S-(2-hydroxyacyl)glutathione + H2O = a 2-hydroxy carboxylate + glutathione + H(+). The protein operates within secondary metabolite metabolism; methylglyoxal degradation; (R)-lactate from methylglyoxal: step 2/2. Thiolesterase that catalyzes the hydrolysis of S-D-lactoyl-glutathione to form glutathione and D-lactic acid. This chain is Hydroxyacylglutathione hydrolase, found in Escherichia coli (strain SMS-3-5 / SECEC).